The following is a 580-amino-acid chain: Cleavage stimulation factor subunit 2 (580 aa).

Position 14 is a phosphoserine (Ser14). Residues 16–94 (RSVFVGNIPY…RALRVDNAAS (79 aa)) form the RRM domain. Residues 108 to 248 (APVIESPYGE…VNGAPPMMQA (141 aa)) form an interactions with CSTF3 and SYMPK region. Lys189 participates in a covalent cross-link: Glycyl lysine isopeptide (Lys-Gly) (interchain with G-Cter in SUMO2). Arg308 is modified (omega-N-methylarginine). Disordered regions lie at residues 311 to 331 (LPTN…DPRG) and 347 to 414 (LGPP…RGLD). Basic and acidic residues-rich tracts occupy residues 363–376 (PGHE…HDMR) and 405–414 (RGGRDPRGLD). The stretch at 413 to 417 (LDARG) is one 1; approximate repeat. A 12 X 5 AA tandem repeats of M-E-A-R-[AG] region spans residues 413 to 472 (LDARGMEARAMEARGLDARGLEARAMEARAMEARAMEARAMEARAMEARAMEARGMDTRG). 2 consecutive repeat copies span residues 418–422 (MEARA) and 423–427 (MEARG). The 4; approximate repeat unit spans residues 428–432 (LDARG). One copy of the 5; approximate repeat lies at 433–437 (LEARA). Tandem repeats lie at residues 438 to 442 (MEARA), 443 to 447 (MEARA), 448 to 452 (MEARA), 453 to 457 (MEARA), 458 to 462 (MEARA), and 463 to 467 (MEARG). One copy of the 12; approximate repeat lies at 468–472 (MDTRG). An omega-N-methylarginine mark is found at Arg471 and Arg478. The interval 512-536 (MQGASMQGGSQPGGFSPGQSQVTPQ) is disordered. Residues 517–580 (MQGGSQPGGF…EQIQKSTGAP (64 aa)) are interaction with RPO2TC1. Phosphoserine is present on residues Ser521 and Ser527.

As to quaternary structure, the CSTF complex is composed of CSTF1 (50 kDa subunit), CSTF2 (64 kDa subunit) and CSTF3 (77 kDa subunit). CSTF2 directly interacts with CSTF3, SYMPK and RPO2TC1. Interacts with HSF1 in heat-stressed cells. Interacts with CPSF2, CPSF3 and FIP1L1. Interacts with DDX1. As to expression, expressed in most somatic cell types (at protein level). Highly expressed in testis, except in meiotic spermatocytes.

It is found in the nucleus. Its function is as follows. One of the multiple factors required for polyadenylation and 3'-end cleavage of mammalian pre-mRNAs. This subunit is directly involved in the binding to pre-mRNAs. This Mus musculus (Mouse) protein is Cleavage stimulation factor subunit 2 (Cstf2).